Consider the following 189-residue polypeptide: ATP-dependent protease subunit HslV (189 aa).

The active site involves Thr12. Ser172, Cys175, and Thr178 together coordinate Na(+).

Belongs to the peptidase T1B family. HslV subfamily. In terms of assembly, a double ring-shaped homohexamer of HslV is capped on each side by a ring-shaped HslU homohexamer. The assembly of the HslU/HslV complex is dependent on binding of ATP.

It localises to the cytoplasm. The catalysed reaction is ATP-dependent cleavage of peptide bonds with broad specificity.. With respect to regulation, allosterically activated by HslU binding. Its function is as follows. Protease subunit of a proteasome-like degradation complex believed to be a general protein degrading machinery. In Ehrlichia chaffeensis (strain ATCC CRL-10679 / Arkansas), this protein is ATP-dependent protease subunit HslV.